The sequence spans 93 residues: Chaperone NapD (93 aa).

This sequence belongs to the NapD family. Interacts with the cytoplasmic NapA precursor.

It is found in the cytoplasm. Functionally, chaperone for NapA, the catalytic subunit of the periplasmic nitrate reductase. It binds directly and specifically to the twin-arginine signal peptide of NapA, preventing premature interaction with the Tat translocase and premature export. The polypeptide is Chaperone NapD (Haemophilus influenzae (strain ATCC 51907 / DSM 11121 / KW20 / Rd)).